Reading from the N-terminus, the 185-residue chain is MINDIKKDAQERMEKSVEALKNSLSKVRTGRAHPSLLSGISVDYYGAATPLTQVANVIAEDARTLAITVFDKELTQKVEKAIMMSDLGLNPMSAGTVIRVPLPPLTEERRKDLVKIVRGEAEGGRVAVRNIRRDANSDLKALLKEKEISEDEDRKAQDEIQKLTDAAVKKIDDVLAAKEKELMEV.

Belongs to the RRF family.

It is found in the cytoplasm. Functionally, responsible for the release of ribosomes from messenger RNA at the termination of protein biosynthesis. May increase the efficiency of translation by recycling ribosomes from one round of translation to another. The sequence is that of Ribosome-recycling factor from Vibrio vulnificus (strain YJ016).